A 168-amino-acid chain; its full sequence is Protein GRIM REAPER (168 aa).

Residues methionine 1–serine 30 form the signal peptide. Asparagine 59 carries N-linked (GlcNAc...) asparagine glycosylation.

The protein belongs to the STIG1 family. As to quaternary structure, interacts with PRK5 and to a lower extent with PRK4. In terms of tissue distribution, highly expressed in flowers, and at very low levels in leaves.

It localises to the secreted. It is found in the extracellular space. The protein resides in the apoplast. Functionally, involved in the regulation of cell death induced by extracellular reactive oxygen species. Only the processed peptide, and not the full length GRI can bind in vivo to the extracellular domain of the receptor PRK5. The GRIp-induced cell death is superoxide and salicylic acid dependent. The chain is Protein GRIM REAPER from Arabidopsis thaliana (Mouse-ear cress).